The sequence spans 783 residues: DNA polymerase II (783 aa).

Belongs to the DNA polymerase type-B family.

It catalyses the reaction DNA(n) + a 2'-deoxyribonucleoside 5'-triphosphate = DNA(n+1) + diphosphate. DNA polymerase II activity is regulated by the lexA gene during the SOS response. Its function is as follows. Thought to be involved in DNA repair and/or mutagenesis. Its processivity is enhanced by the beta sliding clamp (dnaN) and clamp loader. This is DNA polymerase II (polB) from Escherichia coli (strain K12).